Reading from the N-terminus, the 167-residue chain is Small heat shock protein C1 (167 aa).

The sHSP domain maps to 59–167 (PFYESNSIKS…EQDAKEIPIN (109 aa)).

Belongs to the small heat shock protein (HSP20) family.

This Rickettsia bellii (strain RML369-C) protein is Small heat shock protein C1 (hspC1).